The following is a 110-amino-acid chain: Phosphoribosyl-ATP pyrophosphatase (110 aa).

This sequence belongs to the PRA-PH family.

The protein resides in the cytoplasm. It catalyses the reaction 1-(5-phospho-beta-D-ribosyl)-ATP + H2O = 1-(5-phospho-beta-D-ribosyl)-5'-AMP + diphosphate + H(+). It participates in amino-acid biosynthesis; L-histidine biosynthesis; L-histidine from 5-phospho-alpha-D-ribose 1-diphosphate: step 2/9. The sequence is that of Phosphoribosyl-ATP pyrophosphatase from Stutzerimonas stutzeri (strain A1501) (Pseudomonas stutzeri).